The sequence spans 240 residues: Insulin-like growth factor-binding protein 6 (240 aa).

Residues 1-27 form the signal peptide; the sequence is MTPHRLLPPLLLLLALLLAASPGGALA. One can recognise an IGFBP N-terminal domain in the interval 28–107; sequence RCPGCGQGVQ…LLGRGRCLPA (80 aa). Intrachain disulfides connect cysteine 29–cysteine 32, cysteine 40–cysteine 44, cysteine 57–cysteine 63, cysteine 71–cysteine 84, and cysteine 78–cysteine 104. Residues 109–160 form a disordered region; sequence APAVAEENPKESKPQAGTARPQDVNRRDQQRNPGTSTTPSQPNSAGVQDTEM. A glycan (O-linked (HexNAc...) threonine) is linked at threonine 126. Polar residues predominate over residues 139–155; sequence RNPGTSTTPSQPNSAGV. Serine 144 is a glycosylation site (O-linked (HexNAc...) serine). Residues threonine 145 and threonine 146 are each glycosylated (O-linked (HexNAc...) threonine). Serine 152 carries an O-linked (HexNAc...) serine glycan. One can recognise a Thyroglobulin type-1 domain in the interval 160 to 234; it reads MGPCRRHLDS…SPDGNGSSSC (75 aa). Disulfide bonds link cysteine 163/cysteine 190, cysteine 201/cysteine 212, and cysteine 214/cysteine 234. Positions 217–240 are disordered; the sequence is RMGKSLPGSPDGNGSSSCPTGSSG. Over residues 228 to 240 the composition is skewed to polar residues; it reads GNGSSSCPTGSSG.

Interacts (via C-terminal domain) with PHB2. O-linked glycans consist of hexose (probably Gal), N-acetylhexosamine (probably GalNAc) and sialic acid residues. O-glycosylated with core 1 or possibly core 8 glycans. O-glycosylated on one site only in the region AA 143-168 in cerebrospinal fluid.

Its subcellular location is the secreted. In terms of biological role, IGF-binding proteins prolong the half-life of the IGFs and have been shown to either inhibit or stimulate the growth promoting effects of the IGFs on cell culture. They alter the interaction of IGFs with their cell surface receptors. Activates the MAPK signaling pathway and induces cell migration. This Homo sapiens (Human) protein is Insulin-like growth factor-binding protein 6.